Reading from the N-terminus, the 168-residue chain is MAFNDCFSLNYPGNPCPGDLIEVFRPGYQHWALYLGDGYVINIAPVDGIPASFTSAKSVFSSKALVKMQLLKDVVGNDTYRINNKYDETYPPLPVEEIIKRSEFVIGQEVAYNLLVNNCEHFVTLLRYGEGVSEQANRAISTVEFVTAAVGVFSFLGLFPKGQRAKYY.

Residues 1 to 138 (MAFNDCFSLN…GEGVSEQANR (138 aa)) lie on the Cytoplasmic side of the membrane. Positions 20–135 (LIEVFRPGYQ…LRYGEGVSEQ (116 aa)) constitute an LRAT domain. The active site involves H30. C119 functions as the Acyl-thioester intermediate in the catalytic mechanism. The helical transmembrane segment at 139 to 159 (AISTVEFVTAAVGVFSFLGLF) threads the bilayer. Topologically, residues 160-168 (PKGQRAKYY) are lumenal.

The protein belongs to the H-rev107 family. Abundantly expressed in testis, skeletal muscle, brain, and heart. In terms of tissue distribution, highly expressed in the testis, skeletal muscle, brain, heart, and thyroid.

The protein localises to the membrane. It is found in the cytoplasm. It localises to the nucleus. It carries out the reaction a 1,2-diacyl-sn-glycero-3-phosphocholine + H2O = a 1-acyl-sn-glycero-3-phosphocholine + a fatty acid + H(+). The catalysed reaction is a 1,2-diacyl-sn-glycero-3-phosphocholine + H2O = a 2-acyl-sn-glycero-3-phosphocholine + a fatty acid + H(+). It catalyses the reaction 1,2-dihexadecanoyl-sn-glycero-3-phosphocholine + H2O = 2-hexadecanoyl-sn-glycero-3-phosphocholine + hexadecanoate + H(+). The enzyme catalyses 1,2-dihexadecanoyl-sn-glycero-3-phosphocholine + H2O = 1-hexadecanoyl-sn-glycero-3-phosphocholine + hexadecanoate + H(+). It carries out the reaction 1-hexadecanoyl-2-(5Z,8Z,11Z,14Z-eicosatetraenoyl)-sn-glycero-3-phosphoethanolamine + H2O = 2-(5Z,8Z,11Z,14Z)-eicosatetraenoyl-sn-glycero-3-phosphoethanolamine + hexadecanoate + H(+). The catalysed reaction is 1-hexadecanoyl-2-(5Z,8Z,11Z,14Z-eicosatetraenoyl)-sn-glycero-3-phosphoethanolamine + H2O = 1-hexadecanoyl-sn-glycero-3-phosphoethanolamine + (5Z,8Z,11Z,14Z)-eicosatetraenoate + H(+). It catalyses the reaction 1,2-di-(9Z-octadecenoyl)-sn-glycero-3-phosphoethanolamine + 1,2-dihexadecanoyl-sn-glycero-3-phosphocholine = hexadecanoyl-sn-glycero-3-phosphocholine + N-hexadecanoyl-1,2-di-(9Z-octadecenoyl)-sn-glycero-3-phosphoethanolamine + H(+). The enzyme catalyses 1,2-dihexadecanoyl-sn-glycero-3-phosphocholine + a 2-acyl-sn-glycero-3-phosphocholine = a 1-hexadecanoyl-2-acyl-sn-glycero-3-phosphocholine + 2-hexadecanoyl-sn-glycero-3-phosphocholine. Exhibits both phospholipase A1/2 and acyltransferase activities. Shows phospholipase A1 (PLA1) and A2 (PLA2) activity, catalyzing the calcium-independent release of fatty acids from the sn-1 or sn-2 position of glycerophospholipids. Shows O-acyltransferase activity, catalyzing the transfer of a fatty acyl group from glycerophospholipid to the hydroxyl group of lysophospholipid. Shows N-acyltransferase activity, catalyzing the calcium-independent transfer of a fatty acyl group at the sn-1 position of phosphatidylcholine (PC) and other glycerophospholipids to the primary amine of phosphatidylethanolamine (PE), forming N-acylphosphatidylethanolamine (NAPE) which serves as precursor for N-acylethanolamines (NAEs). The chain is Phospholipase A and acyltransferase 1 from Homo sapiens (Human).